The sequence spans 380 residues: Chaperone protein DnaJ (380 aa).

The region spanning 5–69 is the J domain; it reads DYYEILGVSK…QKRAHYDQFG (65 aa). A CR-type zinc finger spans residues 135–217; it reads GKETDIEIPR…CGGTGRVKRR (83 aa). Residues Cys-148, Cys-151, Cys-165, Cys-168, Cys-191, Cys-194, Cys-205, and Cys-208 each coordinate Zn(2+). 4 CXXCXGXG motif repeats span residues 148–155, 165–172, 191–198, and 205–212; these read CNTCHGTG, CSYCHGTG, CPYCGGTG, and CTTCGGTG.

Belongs to the DnaJ family. As to quaternary structure, homodimer. Requires Zn(2+) as cofactor.

Its subcellular location is the cytoplasm. Functionally, participates actively in the response to hyperosmotic and heat shock by preventing the aggregation of stress-denatured proteins and by disaggregating proteins, also in an autonomous, DnaK-independent fashion. Unfolded proteins bind initially to DnaJ; upon interaction with the DnaJ-bound protein, DnaK hydrolyzes its bound ATP, resulting in the formation of a stable complex. GrpE releases ADP from DnaK; ATP binding to DnaK triggers the release of the substrate protein, thus completing the reaction cycle. Several rounds of ATP-dependent interactions between DnaJ, DnaK and GrpE are required for fully efficient folding. Also involved, together with DnaK and GrpE, in the DNA replication of plasmids through activation of initiation proteins. The sequence is that of Chaperone protein DnaJ from Parageobacillus thermoglucosidasius (Geobacillus thermoglucosidasius).